The chain runs to 82 residues: uncharacterized protein (82 aa).

The segment covering 29-38 has biased composition (low complexity); sequence TATKSTSSGS. The interval 29–64 is disordered; the sequence is TATKSTSSGSVPSFFTESTSTPLNQSKTNTSTLNKS. The segment covering 39–50 has biased composition (polar residues); it reads VPSFFTESTSTP. Over residues 51–64 the composition is skewed to low complexity; that stretch reads LNQSKTNTSTLNKS.

This is an uncharacterized protein from Dictyostelium discoideum (Social amoeba).